A 1761-amino-acid chain; its full sequence is Nonribosomal peptide synthetase 6 (1761 aa).

Residues 63 to 468 are adenylation; it reads ERAALHPEKI…GRQDQQVKLR (406 aa). One can recognise a Carrier 1 domain in the interval 600 to 675; the sequence is EATTEMELKL…SMAEKAKPVS (76 aa). Position 636 is an O-(pantetheine 4'-phosphoryl)serine (Ser636). The condensation 1 stretch occupies residues 712–1135; the sequence is VEDVYPCTPL…AVLDPVEAQD (424 aa). 2 Carrier domains span residues 1169–1242 and 1237–1313; these read SPNE…SNER and SASN…EEET. Residues Ser1203 and Ser1274 each carry the O-(pantetheine 4'-phosphoryl)serine modification. A condensation 2 region spans residues 1354 to 1677; the sequence is IYPTRPLQQL…ESVQWFDTVV (324 aa).

Belongs to the NRP synthetase family.

It functions in the pathway siderophore biosynthesis. In terms of biological role, nonribosomal peptide synthetase; part of the gene cluster that mediates the biosynthesis of hydroxamate-containing siderophores that play a critical role in virulence. Cochliobolus heterostrophus produces extracellular coprogen-type siderophores including coprogen, neocoprogen I and neocoprogen II, as well as the intracellular siderophore ferricrocin. The role of extracellular siderophores is to supply iron to the fungus during plant infection, and the intracellular ferricrocin is required for intracellular iron distribution and storage with a crucial role in ascus and ascospore development. SIDA2 catalyzes the conversion of L-ornithine to N(5)-hydroxyornithine, the first step in the biosynthesis of all hydroxamate-containing siderophores. The assembly of extracellular coprogen-type siderophores is then performed by the nonribosomal peptide synthetase (NRPS) NPS6 whereas the intracellular siderophore ferricrocin is assembled by NPS2. The polypeptide is Nonribosomal peptide synthetase 6 (Cochliobolus heterostrophus (strain C4 / ATCC 48331 / race T) (Southern corn leaf blight fungus)).